A 202-amino-acid polypeptide reads, in one-letter code: Response regulator RamR (202 aa).

The segment at 1 to 121 (MGEMVRIAVV…LITAVHTVAR (121 aa)) is response regulatory. Positions 135 to 200 (LKGAEMPLTT…DAIRIVQSAG (66 aa)) constitute an HTH luxR-type domain. The H-T-H motif DNA-binding region spans 159-178 (IAEIAARLHLSRGTVRNYMA).

Homodimer, in the absence of phosphorylation. May be phosphorylated by an unknown kinase, probably on Asp-56.

In terms of biological role, a transcription factor required for aerial hyphae formation on rich medium. Activates transcription of ramC. Might be part of a two-component regulatory system. Binds the promoter of ramC. Non-phosphorylated protein cooperatively binds multiple sites in the ramC promoter. Has not been seen to autophosphorylate using the small molecule phosphodonors phosphoramidate, acetyl phosphate or carbamoyl phosphate. Upon low expression suppresses the bald (bld, no aerial hyphae) phenotype of citA but not bldJ mutants; higher expression also suppresses the bldJ mutant as well as several other bld mutations, inducing SapB production even on media where SapB is normally not produced. Expression of the ram locus (ramA, ramB and ramR) induces rapid aerial mycelium formation in S.lividans. Overexpression suppresses the no aerial hyphae phenotype of a chaplin-negative strain, probably by inducing expression of SapB. Overexpression of RamR show there are about 280 genes having at least a threefold increase or fourfold decrease in RNA abundance versus wild-type including gene cluster SCO4072-SCO4075. This is Response regulator RamR from Streptomyces coelicolor (strain ATCC BAA-471 / A3(2) / M145).